The primary structure comprises 660 residues: MKTVVFAYHDMGCLGIEALLSAGYEISAIFTHTDNPGEKAFYGSVARLAAERGIPVYAPDNVNHPLWMERIAQLSPEVIFSFYYRHLICDEILQLAPRGAFNLHGSLLPKYRGRAPLNWVLVNGETETGVTLHRMVKRADAGAIVAQLRVAIAPDDIAITLHHKLCHAARQLLEQTLPAIKHGNILEIAQRENEATCFGRRTPDDSFLEWHKPASVLHNMVRAVADPWPGAFSYVGNQKFTVWSSRVHPHASKAQPGSVISVAPLLIACGDGALEIVTGQAGDGITMQGSQLAQTLGLVQGSRLNSQPACAARRRTRVLILGVNGFIGNHLTERLLREDHYEVYGLDIGSDAISRFMNHPHFHFVEGDISIHSEWIEYHVKKCDVVLPLVAIATPIEYTRNPLRVFELDFEENLRIIRYCVKYRKRIIFPSTSEVYGMCSDKYFDEDHSNLIVGPVNKPRWIYSVSKQLLDRVIWAYGEKEGLQFTLFRPFNWMGPRLDNLNAARIGSSRAITQLILNLVEGSPIKLIDGGKQKRCFTDIRDGIEALYRIIENAGNRCDGEIINIGNPENEASIEELGEMLLASFEKHPLRHYFPPFAGFRVVESSSYYGKGYQDVEHRKPSIRNARRCLNWEPKIDMQETIDETLDFFLRTVDLTDKPS.

The tract at residues 1 to 304 (MKTVVFAYHD…TLGLVQGSRL (304 aa)) is formyltransferase ArnAFT. 86–88 (HLI) is a binding site for (6R)-10-formyltetrahydrofolate. The Proton donor; for formyltransferase activity role is filled by His104. Residues Arg114 and 136–140 (VKRAD) each bind (6R)-10-formyltetrahydrofolate. A dehydrogenase ArnADH region spans residues 314 to 660 (RRTRVLILGV…RTVDLTDKPS (347 aa)). Residues Asp347 and 368 to 369 (DI) contribute to the NAD(+) site. UDP-alpha-D-glucuronate contacts are provided by residues Ala393, Tyr398, and 432 to 433 (TS). Glu434 serves as the catalytic Proton acceptor; for decarboxylase activity. Residues Arg460, Asn492, 526–535 (KLIDGGKQKR), and Tyr613 contribute to the UDP-alpha-D-glucuronate site. The active-site Proton donor; for decarboxylase activity is the Arg619.

In the N-terminal section; belongs to the Fmt family. UDP-L-Ara4N formyltransferase subfamily. The protein in the C-terminal section; belongs to the NAD(P)-dependent epimerase/dehydratase family. UDP-glucuronic acid decarboxylase subfamily. In terms of assembly, homohexamer, formed by a dimer of trimers.

It carries out the reaction UDP-alpha-D-glucuronate + NAD(+) = UDP-beta-L-threo-pentopyranos-4-ulose + CO2 + NADH. The catalysed reaction is UDP-4-amino-4-deoxy-beta-L-arabinose + (6R)-10-formyltetrahydrofolate = UDP-4-deoxy-4-formamido-beta-L-arabinose + (6S)-5,6,7,8-tetrahydrofolate + H(+). It participates in nucleotide-sugar biosynthesis; UDP-4-deoxy-4-formamido-beta-L-arabinose biosynthesis; UDP-4-deoxy-4-formamido-beta-L-arabinose from UDP-alpha-D-glucuronate: step 1/3. Its pathway is nucleotide-sugar biosynthesis; UDP-4-deoxy-4-formamido-beta-L-arabinose biosynthesis; UDP-4-deoxy-4-formamido-beta-L-arabinose from UDP-alpha-D-glucuronate: step 3/3. It functions in the pathway bacterial outer membrane biogenesis; lipopolysaccharide biosynthesis. In terms of biological role, bifunctional enzyme that catalyzes the oxidative decarboxylation of UDP-glucuronic acid (UDP-GlcUA) to UDP-4-keto-arabinose (UDP-Ara4O) and the addition of a formyl group to UDP-4-amino-4-deoxy-L-arabinose (UDP-L-Ara4N) to form UDP-L-4-formamido-arabinose (UDP-L-Ara4FN). The modified arabinose is attached to lipid A and is required for resistance to polymyxin and cationic antimicrobial peptides. This chain is Bifunctional polymyxin resistance protein ArnA, found in Escherichia coli O81 (strain ED1a).